The following is a 145-amino-acid chain: D-aminoacyl-tRNA deacylase (145 aa).

A Gly-cisPro motif, important for rejection of L-amino acids motif is present at residues 137–138 (GP).

This sequence belongs to the DTD family. In terms of assembly, homodimer.

It localises to the cytoplasm. It carries out the reaction glycyl-tRNA(Ala) + H2O = tRNA(Ala) + glycine + H(+). The catalysed reaction is a D-aminoacyl-tRNA + H2O = a tRNA + a D-alpha-amino acid + H(+). An aminoacyl-tRNA editing enzyme that deacylates mischarged D-aminoacyl-tRNAs. Also deacylates mischarged glycyl-tRNA(Ala), protecting cells against glycine mischarging by AlaRS. Acts via tRNA-based rather than protein-based catalysis; rejects L-amino acids rather than detecting D-amino acids in the active site. By recycling D-aminoacyl-tRNA to D-amino acids and free tRNA molecules, this enzyme counteracts the toxicity associated with the formation of D-aminoacyl-tRNA entities in vivo and helps enforce protein L-homochirality. This Brevibacillus brevis (strain 47 / JCM 6285 / NBRC 100599) protein is D-aminoacyl-tRNA deacylase.